The sequence spans 297 residues: Nucleotide-binding protein Bphyt_0592 (297 aa).

8 to 15 contacts ATP; that stretch reads GISGSGKS. 57-60 is a GTP binding site; that stretch reads DARS.

The protein belongs to the RapZ-like family.

Its function is as follows. Displays ATPase and GTPase activities. The chain is Nucleotide-binding protein Bphyt_0592 from Paraburkholderia phytofirmans (strain DSM 17436 / LMG 22146 / PsJN) (Burkholderia phytofirmans).